The sequence spans 284 residues: MEMO1 family protein MMP1387 (284 aa).

Belongs to the MEMO1 family.

The chain is MEMO1 family protein MMP1387 from Methanococcus maripaludis (strain DSM 14266 / JCM 13030 / NBRC 101832 / S2 / LL).